The chain runs to 132 residues: Small ribosomal subunit protein uS8 (132 aa).

The protein belongs to the universal ribosomal protein uS8 family. Part of the 30S ribosomal subunit. Contacts proteins S5 and S12.

Functionally, one of the primary rRNA binding proteins, it binds directly to 16S rRNA central domain where it helps coordinate assembly of the platform of the 30S subunit. The sequence is that of Small ribosomal subunit protein uS8 from Alkaliphilus metalliredigens (strain QYMF).